Reading from the N-terminus, the 460-residue chain is Putative glycoside/cation symporter YagG (460 aa).

Topologically, residues Met-1–Lys-9 are cytoplasmic. Transmembrane regions (helical) follow at residues Ile-10–Leu-30 and Ala-31–Val-51. At Ser-52 to Arg-78 the chain is on the cytoplasmic side. A helical transmembrane segment spans residues Pro-79 to Pro-99. The Periplasmic segment spans residues Asp-100–Lys-106. A helical transmembrane segment spans residues Ile-107–Pro-127. Residues Tyr-128–Phe-150 lie on the Cytoplasmic side of the membrane. Residues Phe-151–Ile-171 traverse the membrane as a helical segment. Residues Gly-172–Gly-179 lie on the Periplasmic side of the membrane. The chain crosses the membrane as a helical span at residues Tyr-180 to Phe-200. The Cytoplasmic segment spans residues Thr-201–Glu-262. Residues Leu-263–Ser-283 form a helical membrane-spanning segment. At Arg-284–Leu-308 the chain is on the periplasmic side. Residues Ile-309–Phe-329 traverse the membrane as a helical segment. Over Val-330–Leu-366 the chain is Cytoplasmic. The chain crosses the membrane as a helical span at residues Phe-367–Val-387. Over Asn-388–Lys-405 the chain is Periplasmic. A helical membrane pass occupies residues Ile-406 to Tyr-426. The Cytoplasmic segment spans residues Lys-427–His-460.

Belongs to the sodium:galactoside symporter (TC 2.A.2) family.

Its subcellular location is the cell inner membrane. In Escherichia coli (strain K12), this protein is Putative glycoside/cation symporter YagG (yagG).